Here is a 380-residue protein sequence, read N- to C-terminus: NF-kappa-B inhibitor-like protein 1 (380 aa).

Residues 1–34 (MSNPSPQVPEGEASTSVCRPKSSMASTSRRQRRE) are disordered. The span at 13–28 (ASTSVCRPKSSMASTS) shows a compositional bias: polar residues. ANK repeat units lie at residues 64–93 (GQPPPLHRACARHDAPALCLLLRLGADPAH) and 97–133 (HGDTALHAAARQGPDAYTDFFLPLLSRCPSAMGIKNK). Disordered stretches follow at residues 131–167 (KNKDGETPGQILGWGPPWDSAEEEEEDEASKEREWRQ) and 185–293 (EDDA…RGSL). Ser150 is modified (phosphoserine). Residues 150–159 (SAEEEEEDEA) show a composition bias toward acidic residues. 2 stretches are compositionally biased toward basic and acidic residues: residues 204 to 221 (RMAREHAQKRQQQRETEG) and 236 to 272 (RQQEEEQRLFRERARAKEEELRESQARRAQEAPRDPV).

As to quaternary structure, interacts with CACTIN (via N-terminal domain); the interaction occurs in a pro-inflammatory-independent manner.

It localises to the nucleus. Functionally, involved in the regulation of innate immune response. Acts as negative regulator of Toll-like receptor and interferon-regulatory factor (IRF) signaling pathways. Contributes to the negative regulation of transcriptional activation of NF-kappa-B target genes in response to endogenous pro-inflammatory stimuli. This is NF-kappa-B inhibitor-like protein 1 (NFKBIL1) from Sus scrofa (Pig).